A 344-amino-acid polypeptide reads, in one-letter code: Cyanuric acid amidohydrolase (344 aa).

Positions 1-91 (MTVVDIVKRT…ASAFVGTDRP (91 aa)) are RU A. Residues Arg-51 and 71-72 (SG) each bind substrate. Positions 97–232 (ALVAAVGRTA…CHILVLGNSP (136 aa)) are RU B. Residue Lys-146 is part of the active site. Residues Arg-178 and 215 to 216 (SS) each bind substrate. Residue Ser-215 is the Nucleophile of the active site. The RU C stretch occupies residues 238–344 (LRAVHGVMRD…PVTVVYRVAS (107 aa)). Glu-276 contacts Mg(2+). Substrate is bound by residues Arg-303 and 322–323 (SG). Residues Ala-325, Gln-328, Gly-329, Pro-330, and Gly-333 each contribute to the Mg(2+) site.

The protein belongs to the cyclic amide hydrolase (CyAH) family. Homotetramer.

It catalyses the reaction cyanurate + H2O = 1-carboxybiuret + H(+). Its pathway is xenobiotic degradation; atrazine degradation; biuret from cyanurate: step 1/1. With respect to regulation, inhibited by barbituric acid. Functionally, responsible for the hydrolysis of cyanuric acid, an intermediate formed during catabolism of s-triazine based compounds in herbicides such as atrazine and polymers such as melamine. Catalyzes the hydrolytic opening of the s-triazine ring of cyanuric acid (2,4,6-trihydroxy-s-triazine) to yield carbon dioxide and carboxybiuret, which spontaneously decarboxylates to biuret. The sequence is that of Cyanuric acid amidohydrolase from Pseudonocardia dioxanivorans (strain ATCC 55486 / DSM 44775 / JCM 13855 / CB1190).